The sequence spans 509 residues: Ribonuclease Y (509 aa).

The helical transmembrane segment at 5-25 (IIILLSVFCGIFFICFIICSS) threads the bilayer. Residues 199-259 (TTNIVKLPSD…IRREIATRTL (61 aa)) form the KH domain. Residues 325 to 418 (VLAHSIEVAK…VAIADSISAS (94 aa)) form the HD domain.

The protein belongs to the RNase Y family.

The protein localises to the cell membrane. Functionally, endoribonuclease that initiates mRNA decay. This chain is Ribonuclease Y, found in Mycoplasma mycoides subsp. mycoides SC (strain CCUG 32753 / NCTC 10114 / PG1).